A 229-amino-acid chain; its full sequence is Cytochrome c oxidase subunit 2 (229 aa).

Over 1-14 (MANHLQFNFQDATS) the chain is Mitochondrial intermembrane. A helical membrane pass occupies residues 15 to 45 (PLMQELVKFHDHSLTILFFISALILYVLMMT). Over 46–59 (SLSKLTNKNILDSQ) the chain is Mitochondrial matrix. A helical membrane pass occupies residues 60–87 (EIEMVWTVIPAFILIMLALPSIQILYLM). Topologically, residues 88 to 229 (DEIASPDITI…FESWIIKLSL (142 aa)) are mitochondrial intermembrane. Cu cation-binding residues include His-162, Cys-197, Glu-199, Cys-201, His-205, and Met-208. Glu-199 contacts Mg(2+).

Belongs to the cytochrome c oxidase subunit 2 family. As to quaternary structure, component of the cytochrome c oxidase (complex IV, CIV), a multisubunit enzyme composed of 14 subunits. The complex is composed of a catalytic core of 3 subunits MT-CO1, MT-CO2 and MT-CO3, encoded in the mitochondrial DNA, and 11 supernumerary subunits COX4I, COX5A, COX5B, COX6A, COX6B, COX6C, COX7A, COX7B, COX7C, COX8 and NDUFA4, which are encoded in the nuclear genome. The complex exists as a monomer or a dimer and forms supercomplexes (SCs) in the inner mitochondrial membrane with NADH-ubiquinone oxidoreductase (complex I, CI) and ubiquinol-cytochrome c oxidoreductase (cytochrome b-c1 complex, complex III, CIII), resulting in different assemblies (supercomplex SCI(1)III(2)IV(1) and megacomplex MCI(2)III(2)IV(2)). Found in a complex with TMEM177, COA6, COX18, COX20, SCO1 and SCO2. Interacts with TMEM177 in a COX20-dependent manner. Interacts with COX20. Interacts with COX16. Cu cation serves as cofactor.

The protein localises to the mitochondrion inner membrane. The enzyme catalyses 4 Fe(II)-[cytochrome c] + O2 + 8 H(+)(in) = 4 Fe(III)-[cytochrome c] + 2 H2O + 4 H(+)(out). Component of the cytochrome c oxidase, the last enzyme in the mitochondrial electron transport chain which drives oxidative phosphorylation. The respiratory chain contains 3 multisubunit complexes succinate dehydrogenase (complex II, CII), ubiquinol-cytochrome c oxidoreductase (cytochrome b-c1 complex, complex III, CIII) and cytochrome c oxidase (complex IV, CIV), that cooperate to transfer electrons derived from NADH and succinate to molecular oxygen, creating an electrochemical gradient over the inner membrane that drives transmembrane transport and the ATP synthase. Cytochrome c oxidase is the component of the respiratory chain that catalyzes the reduction of oxygen to water. Electrons originating from reduced cytochrome c in the intermembrane space (IMS) are transferred via the dinuclear copper A center (CU(A)) of subunit 2 and heme A of subunit 1 to the active site in subunit 1, a binuclear center (BNC) formed by heme A3 and copper B (CU(B)). The BNC reduces molecular oxygen to 2 water molecules using 4 electrons from cytochrome c in the IMS and 4 protons from the mitochondrial matrix. This Myxine glutinosa (Atlantic hagfish) protein is Cytochrome c oxidase subunit 2 (MT-CO2).